We begin with the raw amino-acid sequence, 248 residues long: (2S)-[(R)-hydroxy(phenyl)methyl]succinyl-CoA dehydrogenase subunit BbsD (248 aa).

NAD(+) is bound by residues S15, D36, D62, I63, N89, Y153, and K157. Residue Y153 is the Proton acceptor of the active site.

It belongs to the short-chain dehydrogenases/reductases (SDR) family. As to quaternary structure, heterotetramer composed of 2 inactive BbsC subunits and 2 active BbsD subunits.

It catalyses the reaction (2S)-[(R)-hydroxy(phenyl)methyl]succinyl-CoA + NAD(+) = (S)-2-benzoylsuccinyl-CoA + NADH + H(+). The protein operates within xenobiotic degradation; toluene degradation. With respect to regulation, activity is probably regulated by the inactive BbsC subunit. Involved in an anaerobic toluene degradation pathway. Active subunit that catalyzes the oxidation of 2-(alpha-hydroxybenzyl)succinyl-CoA to 2-benzoylsuccinyl-CoA. In vitro, can catalyze the NADH-dependent reduction of the artificial substrates 2,2-dichloroacetophene and 2,4'-dichloroacetophenone. In Thauera aromatica, this protein is (2S)-[(R)-hydroxy(phenyl)methyl]succinyl-CoA dehydrogenase subunit BbsD.